Here is a 619-residue protein sequence, read N- to C-terminus: Putative transcription activator BRLF1 homolog (619 aa).

Disordered stretches follow at residues 301–389 and 563–603; these read LRDS…ETQS and GLVS…SDEM. Composition is skewed to low complexity over residues 371–389 and 567–582; these read EAPQ…ETQS and QQQA…GGPP. The span at 589 to 598 shows a compositional bias: polar residues; that stretch reads QEQQQSSTDP.

It belongs to the herpesviridae TAF50 family.

Its function is as follows. Transcription activation. The polypeptide is Putative transcription activator BRLF1 homolog (50) (Connochaetes taurinus (Blue wildebeest)).